A 224-amino-acid polypeptide reads, in one-letter code: Thiamine-phosphate synthase (224 aa).

4-amino-2-methyl-5-(diphosphooxymethyl)pyrimidine is bound by residues glutamine 44 to lysine 48 and asparagine 79. 2 residues coordinate Mg(2+): aspartate 80 and aspartate 99. Residue serine 117 participates in 4-amino-2-methyl-5-(diphosphooxymethyl)pyrimidine binding. 2-[(2R,5Z)-2-carboxy-4-methylthiazol-5(2H)-ylidene]ethyl phosphate is bound at residue threonine 143–threonine 145. Lysine 146 is a binding site for 4-amino-2-methyl-5-(diphosphooxymethyl)pyrimidine. 2-[(2R,5Z)-2-carboxy-4-methylthiazol-5(2H)-ylidene]ethyl phosphate-binding positions include glycine 175 and isoleucine 195 to serine 196.

It belongs to the thiamine-phosphate synthase family. The cofactor is Mg(2+).

The enzyme catalyses 2-[(2R,5Z)-2-carboxy-4-methylthiazol-5(2H)-ylidene]ethyl phosphate + 4-amino-2-methyl-5-(diphosphooxymethyl)pyrimidine + 2 H(+) = thiamine phosphate + CO2 + diphosphate. It carries out the reaction 2-(2-carboxy-4-methylthiazol-5-yl)ethyl phosphate + 4-amino-2-methyl-5-(diphosphooxymethyl)pyrimidine + 2 H(+) = thiamine phosphate + CO2 + diphosphate. It catalyses the reaction 4-methyl-5-(2-phosphooxyethyl)-thiazole + 4-amino-2-methyl-5-(diphosphooxymethyl)pyrimidine + H(+) = thiamine phosphate + diphosphate. Its pathway is cofactor biosynthesis; thiamine diphosphate biosynthesis; thiamine phosphate from 4-amino-2-methyl-5-diphosphomethylpyrimidine and 4-methyl-5-(2-phosphoethyl)-thiazole: step 1/1. Its function is as follows. Condenses 4-methyl-5-(beta-hydroxyethyl)thiazole monophosphate (THZ-P) and 2-methyl-4-amino-5-hydroxymethyl pyrimidine pyrophosphate (HMP-PP) to form thiamine monophosphate (TMP). This is Thiamine-phosphate synthase from Bacillus cereus (strain ATCC 10987 / NRS 248).